We begin with the raw amino-acid sequence, 306 residues long: 4-hydroxy-3-methylbut-2-enyl diphosphate reductase (306 aa).

Cysteine 12 provides a ligand contact to [4Fe-4S] cluster. Positions 41 and 74 each coordinate (2E)-4-hydroxy-3-methylbut-2-enyl diphosphate. Dimethylallyl diphosphate-binding residues include histidine 41 and histidine 74. Histidine 41 and histidine 74 together coordinate isopentenyl diphosphate. Cysteine 96 serves as a coordination point for [4Fe-4S] cluster. Histidine 124 lines the (2E)-4-hydroxy-3-methylbut-2-enyl diphosphate pocket. Dimethylallyl diphosphate is bound at residue histidine 124. Histidine 124 serves as a coordination point for isopentenyl diphosphate. Glutamate 126 serves as the catalytic Proton donor. Residue threonine 164 coordinates (2E)-4-hydroxy-3-methylbut-2-enyl diphosphate. Position 194 (cysteine 194) interacts with [4Fe-4S] cluster. The (2E)-4-hydroxy-3-methylbut-2-enyl diphosphate site is built by serine 222, serine 223, asparagine 224, and serine 266. The dimethylallyl diphosphate site is built by serine 222, serine 223, asparagine 224, and serine 266. Residues serine 222, serine 223, asparagine 224, and serine 266 each contribute to the isopentenyl diphosphate site.

The protein belongs to the IspH family. [4Fe-4S] cluster is required as a cofactor.

The enzyme catalyses isopentenyl diphosphate + 2 oxidized [2Fe-2S]-[ferredoxin] + H2O = (2E)-4-hydroxy-3-methylbut-2-enyl diphosphate + 2 reduced [2Fe-2S]-[ferredoxin] + 2 H(+). It catalyses the reaction dimethylallyl diphosphate + 2 oxidized [2Fe-2S]-[ferredoxin] + H2O = (2E)-4-hydroxy-3-methylbut-2-enyl diphosphate + 2 reduced [2Fe-2S]-[ferredoxin] + 2 H(+). It functions in the pathway isoprenoid biosynthesis; dimethylallyl diphosphate biosynthesis; dimethylallyl diphosphate from (2E)-4-hydroxy-3-methylbutenyl diphosphate: step 1/1. Its pathway is isoprenoid biosynthesis; isopentenyl diphosphate biosynthesis via DXP pathway; isopentenyl diphosphate from 1-deoxy-D-xylulose 5-phosphate: step 6/6. Catalyzes the conversion of 1-hydroxy-2-methyl-2-(E)-butenyl 4-diphosphate (HMBPP) into a mixture of isopentenyl diphosphate (IPP) and dimethylallyl diphosphate (DMAPP). Acts in the terminal step of the DOXP/MEP pathway for isoprenoid precursor biosynthesis. The protein is 4-hydroxy-3-methylbut-2-enyl diphosphate reductase of Dechloromonas aromatica (strain RCB).